We begin with the raw amino-acid sequence, 76 residues long: Antimicrobial peptide Smp24 (76 aa).

Residues 1–22 form the signal peptide; it reads MQYKTFLVIFMAYLLVTHEAEA. The propeptide occupies 47-76; that stretch reads SKRKRDVEDFFDPYQRDLDLELERLLSQLQ.

It belongs to the non-disulfide-bridged peptide (NDBP) superfamily. Medium-length antimicrobial peptide (group 3) family. As to expression, expressed by the venom gland.

It is found in the secreted. Its subcellular location is the target cell membrane. In terms of biological role, peptide that shows antimicrobial activity, moderate cytolysis on eukaryote cells and interference with DNA synthesis. Has potent activity against Gram-positive bacteria and moderate activity against Gram-negative bacteria, as well as moderate activity against fungi. Acts by inducing bacterial membrane disruption. Uses multiple modes of action depending on the membrane lipid composition. Uses a toroidal pore mechanism against the prokaryotic like membrane and forms hexagonal phase non-lamellar structures in eukaryotic-like membrane. Shows activity against B.subtilis (MIC=4 ug/ml), S.epidermidis (MIC=8 ug/ml), S.aureus (MIC=8 ug/ml), E.coli (MIC=64 ug/ml), K.pneumoniae (MIC=128 ug/ml), P.aeruginosa (MIC=256 ug/ml), and C.albicans (MIC=32 ug/ml). Shows moderate hemolysis activity. This chain is Antimicrobial peptide Smp24, found in Scorpio palmatus (Israeli golden scorpion).